We begin with the raw amino-acid sequence, 457 residues long: MATGKIVQIIGAVIDVEFPQDAVPKVYDALKVESGLTLEVQQQLGGGLVRCIALGTSDGLKRGLKVENTGNPIQVPVGTKTLGRIMNVLGEPIDEKGPIGEEARWDIHRAAPSYEEQSNSTELLETGIKVIDLICPFAKGGKVGLFGGAGVGKTVNMMELIRNIAIEHSGYSVFAGVGERTREGNDFYHEMTDSNVLDKVSLVYGQMNEPPGNRLRVALTGLTMAEKFRDEGRDVLFFVDNIYRYTLAGTEVSALLGRMPSAVGYQPTLAEEMGVLQERITSTKTGSITSVQAVYVPADDLTDPSPATTFAHLDSTVVLSRNIASLGIYPAVDPLDSTSRQLDPLVVGEEHYNVARGVQGTLQRYKELKDIIAILGMDELSEDDKLVVSRARKIERFLSQPFFVAEVFTGSPGKYVSLKDTIRGFKGILEGEFDHIPEQAFYMAGSIDEVVERASKM.

147 to 154 (GGAGVGKT) is a binding site for ATP.

Belongs to the ATPase alpha/beta chains family. In terms of assembly, F-type ATPases have 2 components, CF(1) - the catalytic core - and CF(0) - the membrane proton channel. CF(1) has five subunits: alpha(3), beta(3), gamma(1), delta(1), epsilon(1). CF(0) has three main subunits: a(1), b(2) and c(9-12). The alpha and beta chains form an alternating ring which encloses part of the gamma chain. CF(1) is attached to CF(0) by a central stalk formed by the gamma and epsilon chains, while a peripheral stalk is formed by the delta and b chains.

Its subcellular location is the cell inner membrane. It carries out the reaction ATP + H2O + 4 H(+)(in) = ADP + phosphate + 5 H(+)(out). Functionally, produces ATP from ADP in the presence of a proton gradient across the membrane. The catalytic sites are hosted primarily by the beta subunits. The chain is ATP synthase subunit beta from Haemophilus ducreyi (strain 35000HP / ATCC 700724).